Consider the following 337-residue polypeptide: Holliday junction branch migration complex subunit RuvB (337 aa).

A disordered region spans residues 1 to 22 (MEDERITSAEVQSPDEENEELS). Residues 1–184 (MEDERITSAE…FGIVEHMNYY (184 aa)) are large ATPase domain (RuvB-L). ATP contacts are provided by residues Leu23, Arg24, Gly65, Lys68, Thr69, Thr70, 131–133 (EDF), Arg174, Tyr184, and Arg221. Residue Thr69 participates in Mg(2+) binding. Positions 185–255 (NEADLANIVR…LVSQSLKLLQ (71 aa)) are small ATPAse domain (RuvB-S). Residues 258-337 (NRGLDRTDKK…LGLIDQYMNK (80 aa)) are head domain (RuvB-H). Positions 313 and 318 each coordinate DNA.

This sequence belongs to the RuvB family. Homohexamer. Forms an RuvA(8)-RuvB(12)-Holliday junction (HJ) complex. HJ DNA is sandwiched between 2 RuvA tetramers; dsDNA enters through RuvA and exits via RuvB. An RuvB hexamer assembles on each DNA strand where it exits the tetramer. Each RuvB hexamer is contacted by two RuvA subunits (via domain III) on 2 adjacent RuvB subunits; this complex drives branch migration. In the full resolvosome a probable DNA-RuvA(4)-RuvB(12)-RuvC(2) complex forms which resolves the HJ.

It localises to the cytoplasm. The catalysed reaction is ATP + H2O = ADP + phosphate + H(+). Functionally, the RuvA-RuvB-RuvC complex processes Holliday junction (HJ) DNA during genetic recombination and DNA repair, while the RuvA-RuvB complex plays an important role in the rescue of blocked DNA replication forks via replication fork reversal (RFR). RuvA specifically binds to HJ cruciform DNA, conferring on it an open structure. The RuvB hexamer acts as an ATP-dependent pump, pulling dsDNA into and through the RuvAB complex. RuvB forms 2 homohexamers on either side of HJ DNA bound by 1 or 2 RuvA tetramers; 4 subunits per hexamer contact DNA at a time. Coordinated motions by a converter formed by DNA-disengaged RuvB subunits stimulates ATP hydrolysis and nucleotide exchange. Immobilization of the converter enables RuvB to convert the ATP-contained energy into a lever motion, pulling 2 nucleotides of DNA out of the RuvA tetramer per ATP hydrolyzed, thus driving DNA branch migration. The RuvB motors rotate together with the DNA substrate, which together with the progressing nucleotide cycle form the mechanistic basis for DNA recombination by continuous HJ branch migration. Branch migration allows RuvC to scan DNA until it finds its consensus sequence, where it cleaves and resolves cruciform DNA. This is Holliday junction branch migration complex subunit RuvB from Pediococcus pentosaceus (strain ATCC 25745 / CCUG 21536 / LMG 10740 / 183-1w).